The sequence spans 248 residues: Granzyme B (248 aa).

An N-terminal signal peptide occupies residues 1–18 (MKLLLLLLSFSLAPKTEA). Residues 19-20 (GE) constitute a propeptide, activation peptide. Residues 21–246 (IIGGHEAKPH…FLSWIKKTMK (226 aa)) enclose the Peptidase S1 domain. A disulfide bond links cysteine 50 and cysteine 66. Active-site charge relay system residues include histidine 65 and aspartate 109. 2 disulfide bridges follow: cysteine 143–cysteine 210 and cysteine 174–cysteine 189. Serine 204 serves as the catalytic Charge relay system.

This sequence belongs to the peptidase S1 family. Granzyme subfamily.

The protein localises to the secreted. The protein resides in the cytolytic granule. The enzyme catalyses Preferential cleavage: -Asp-|-Xaa- &gt;&gt; -Asn-|-Xaa- &gt; -Met-|-Xaa-, -Ser-|-Xaa-.. Its activity is regulated as follows. Inactivated by the serine protease inhibitor diisopropylfluorophosphate. Its function is as follows. Abundant protease in the cytosolic granules of cytotoxic T-cells and NK-cells which activates caspase-independent pyroptosis when delivered into the target cell through the immunological synapse. It cleaves after Asp. Once delivered into the target cell, acts by catalyzing cleavage of gasdermin-E (GSDME), releasing the pore-forming moiety of GSDME, thereby triggering pyroptosis and target cell death. Seems to be linked to an activation cascade of caspases (aspartate-specific cysteine proteases) responsible for apoptosis execution. Cleaves caspase-3 and -9 (CASP3 and CASP9, respectively) to give rise to active enzymes mediating apoptosis. Cleaves and activates CASP7 in response to bacterial infection, promoting plasma membrane repair. The chain is Granzyme B (Gzmb) from Rattus norvegicus (Rat).